The sequence spans 91 residues: UPF0358 protein SAS1047 (91 aa).

The protein belongs to the UPF0358 family.

This chain is UPF0358 protein SAS1047, found in Staphylococcus aureus (strain MSSA476).